The primary structure comprises 500 residues: NAD(P)H-quinone oxidoreductase chain 4, chloroplastic (500 aa).

Helical transmembrane passes span 4-24, 37-57, 87-107, 111-131, 134-154, 167-187, 208-228, 242-262, 272-292, 305-325, 330-350, 386-406, 416-436, and 462-482; these read FPWL…IFLL, LCIC…HFQL, IGPI…AWPV, AQLF…SFSS, LLLF…LLSM, FILY…GIGL, ALEV…LPII, HYST…YGLV, AHCL…IYAA, IAYS…SLSD, GAIL…FLAG, LALP…GIIT, ILIA…SLSM, and LFVS…PDFV.

It belongs to the complex I subunit 4 family.

Its subcellular location is the plastid. It is found in the chloroplast thylakoid membrane. The enzyme catalyses a plastoquinone + NADH + (n+1) H(+)(in) = a plastoquinol + NAD(+) + n H(+)(out). It catalyses the reaction a plastoquinone + NADPH + (n+1) H(+)(in) = a plastoquinol + NADP(+) + n H(+)(out). This chain is NAD(P)H-quinone oxidoreductase chain 4, chloroplastic, found in Oenothera parviflora (Small-flowered evening primrose).